We begin with the raw amino-acid sequence, 392 residues long: ATP-dependent RNA helicase eIF4A (392 aa).

The Q motif motif lies at 19–47; that stretch reads DTFDDMNLKPELLRGIYAYGFERPSAIQQ. The region spanning 50 to 220 is the Helicase ATP-binding domain; it reads IMPILGERDV…TKFMRDPIRI (171 aa). 63-70 is a binding site for ATP; it reads AQSGTGKT. The residue at position 65 (Ser65) is a Phosphoserine. The DEAD box signature appears at 168-171; the sequence is DEAD. A Helicase C-terminal domain is found at 231-392; the sequence is GIKQFYVAVE…EMPMNIADLI (162 aa).

It belongs to the DEAD box helicase family. eIF4A subfamily. As to quaternary structure, component of the eIF4F complex, which composition varies with external and internal environmental conditions. It is composed of at least eIF4A, eIF4E and eIF4G.

Its subcellular location is the cytoplasm. The catalysed reaction is ATP + H2O = ADP + phosphate + H(+). Functionally, ATP-dependent RNA helicase which is a subunit of the eIF4F complex involved in cap recognition and is required for mRNA binding to ribosome. In the current model of translation initiation, eIF4A unwinds RNA secondary structures in the 5'-UTR of mRNAs which is necessary to allow efficient binding of the small ribosomal subunit, and subsequent scanning for the initiator codon. The sequence is that of ATP-dependent RNA helicase eIF4A (tif1) from Schizosaccharomyces pombe (strain 972 / ATCC 24843) (Fission yeast).